A 239-amino-acid polypeptide reads, in one-letter code: Probable transcriptional regulatory protein BCG9842_B4761 (239 aa).

It belongs to the TACO1 family. YeeN subfamily.

The protein localises to the cytoplasm. The sequence is that of Probable transcriptional regulatory protein BCG9842_B4761 from Bacillus cereus (strain G9842).